Consider the following 252-residue polypeptide: Adaptation to cold protein B (252 aa).

As to quaternary structure, interacts with AtcC, but not with AtcA and AtcJ. Interacts with the RNA polymerase subunits RpoB and RpoC.

In terms of biological role, involved in cold adaptation. Directly interacts with the RNA polymerase and decreases its activity. May direct the DnaK chaperone to the RNA polymerase to sustain life at low temperatures. Overproduction prevents bacterial growth due to RNA polymerase inhibition. The polypeptide is Adaptation to cold protein B (Shewanella oneidensis (strain ATCC 700550 / JCM 31522 / CIP 106686 / LMG 19005 / NCIMB 14063 / MR-1)).